A 592-amino-acid polypeptide reads, in one-letter code: Tegument protein US23 (592 aa).

The segment at Pro-407–Arg-491 is disordered. Acidic residues predominate over residues Ala-460–Glu-481.

Belongs to the herpesviridae US22 family.

It localises to the virion tegument. The chain is Tegument protein US23 (US23) from Homo sapiens (Human).